The sequence spans 71 residues: Protein translocase subunit SecE (71 aa).

A helical membrane pass occupies residues 43-63; that stretch reads VAGAGILAVGAIGFIIYVLLT.

The protein belongs to the SecE/SEC61-gamma family. Component of the Sec protein translocase complex. Heterotrimer consisting of SecY (alpha), SecG (beta) and SecE (gamma) subunits. The heterotrimers can form oligomers, although 1 heterotrimer is thought to be able to translocate proteins. Interacts with the ribosome. May interact with SecDF, and other proteins may be involved.

The protein resides in the cell membrane. Essential subunit of the Sec protein translocation channel SecYEG. Clamps together the 2 halves of SecY. May contact the channel plug during translocation. The protein is Protein translocase subunit SecE of Methanosarcina acetivorans (strain ATCC 35395 / DSM 2834 / JCM 12185 / C2A).